The primary structure comprises 269 residues: dITP/XTP pyrophosphatase (269 aa).

Position 22-27 (22-27 (SNNAHK)) interacts with substrate. The Proton acceptor role is filled by Asp82. Residue Asp82 participates in Mg(2+) binding. Residues Ser83, 165-168 (FGYD), Lys188, and 193-194 (HR) each bind substrate.

It belongs to the HAM1 NTPase family. Homodimer. It depends on Mg(2+) as a cofactor.

It catalyses the reaction XTP + H2O = XMP + diphosphate + H(+). The catalysed reaction is dITP + H2O = dIMP + diphosphate + H(+). The enzyme catalyses ITP + H2O = IMP + diphosphate + H(+). Functionally, pyrophosphatase that catalyzes the hydrolysis of nucleoside triphosphates to their monophosphate derivatives, with a high preference for the non-canonical purine nucleotides XTP (xanthosine triphosphate), dITP (deoxyinosine triphosphate) and ITP. Seems to function as a house-cleaning enzyme that removes non-canonical purine nucleotides from the nucleotide pool, thus preventing their incorporation into DNA/RNA and avoiding chromosomal lesions. The polypeptide is dITP/XTP pyrophosphatase (Treponema pallidum (strain Nichols)).